The chain runs to 76 residues: Translational regulator CsrA (76 aa).

Belongs to the CsrA/RsmA family. As to quaternary structure, homodimer; the beta-strands of each monomer intercalate to form a hydrophobic core, while the alpha-helices form wings that extend away from the core.

It is found in the cytoplasm. In terms of biological role, a translational regulator that binds mRNA to regulate translation initiation and/or mRNA stability. Usually binds in the 5'-UTR at or near the Shine-Dalgarno sequence preventing ribosome-binding, thus repressing translation. Its main target seems to be the major flagellin gene, while its function is anatagonized by FliW. The sequence is that of Translational regulator CsrA from Helicobacter pylori (strain P12).